A 583-amino-acid polypeptide reads, in one-letter code: Peptidyl-prolyl cis-trans isomerase FKBP10 (583 aa).

Residues 1–27 form the signal peptide; sequence MLRAGPPSHTLLRLPLLQLLLLLLVQA. PPIase FKBP-type domains follow at residues 63–151, 175–263, 287–375, and 400–487; these read GDFV…LDVW, SDFV…IDVH, GDFM…IDFH, and GDFV…VSRE. Asn-71, Asn-183, and Asn-295 each carry an N-linked (GlcNAc...) asparagine glycan. EF-hand domains lie at 498 to 533 and 543 to 578; these read WHED…QVSE and DPEK…DQDR. 10 residues coordinate Ca(2+): Asp-511, Asn-513, Asp-515, Glu-517, Glu-522, Asp-556, Asn-558, Asp-560, Lys-562, and Glu-567. Positions 534–583 are disordered; that stretch reads GKGRLLPGQDPEKTIGDMFQNQDRNQDGKITAEELKLKSDEDQDRVHEEL. Residues 557 to 583 are compositionally biased toward basic and acidic residues; it reads RNQDGKITAEELKLKSDEDQDRVHEEL. A Prevents secretion from ER motif is present at residues 580–583; the sequence is HEEL.

In terms of processing, glycosylated and phosphorylated.

The protein resides in the endoplasmic reticulum lumen. It catalyses the reaction [protein]-peptidylproline (omega=180) = [protein]-peptidylproline (omega=0). Inhibited by both FK506 and rapamycin, but not by cyclosporin A. In terms of biological role, PPIases accelerate the folding of proteins during protein synthesis. The protein is Peptidyl-prolyl cis-trans isomerase FKBP10 (FKBP10) of Bos taurus (Bovine).